A 324-amino-acid chain; its full sequence is Lactonase drp35 (324 aa).

10 residues coordinate Ca(2+): Glu-47, Ser-109, Gly-111, Asp-129, Thr-132, Tyr-134, Asp-137, Asn-184, Asp-235, and Ser-236. The Proton donor role is filled by Asp-235.

Belongs to the SMP-30/CGR1 family. Ca(2+) is required as a cofactor.

The protein localises to the cytoplasm. In terms of biological role, exhibits lactonase activity. Acts in cells with perturbed membrane integrity and is possibly related to the membrane homeostasis. The chain is Lactonase drp35 (drp35) from Staphylococcus saprophyticus subsp. saprophyticus (strain ATCC 15305 / DSM 20229 / NCIMB 8711 / NCTC 7292 / S-41).